The sequence spans 552 residues: Probable glucomannan 4-beta-mannosyltransferase 10 (552 aa).

Residues Ile-62–Ile-82 traverse the membrane as a helical segment. Asp-161 is a catalytic residue. Substrate-binding residues include Asp-220 and Asp-222. Asp-314 is a catalytic residue. A run of 4 helical transmembrane segments spans residues Ile-393–Phe-413, Ile-430–Leu-450, Glu-509–Thr-529, and Leu-530–Val-550.

This sequence belongs to the glycosyltransferase 2 family. Plant cellulose synthase-like A subfamily.

The protein resides in the golgi apparatus membrane. The enzyme catalyses GDP-mannose + (glucomannan)n = GDP + (glucomannan)n+1.. Its function is as follows. Probable mannan synthase which consists of a 4-beta-mannosyltransferase activity on mannan using GDP-mannose. The beta-1,4-mannan product is the backbone for galactomannan synthesis by galactomannan galactosyltransferase. Galactomannan is a noncellulosic polysaccharides of plant cell wall. This Arabidopsis thaliana (Mouse-ear cress) protein is Probable glucomannan 4-beta-mannosyltransferase 10.